We begin with the raw amino-acid sequence, 414 residues long: Putative transporter AmpG 4 (414 aa).

12 helical membrane passes run 15–35 (IFILGIVSGMPLVIIFSTLAV), 44–63 (IAVITTFAVARLSYSLKVFW), 84–104 (WLILCSSLMALVLIAMSKENP), 109–129 (TSFYFLTILLGFLSSTFDIAV), 150–170 (VFGYRIGMLITGAGALYLAEI), 177–197 (LTFCVIAIIFVVATIFIITVN), 230–250 (FAVTILLAVIFFKLGDAMLGA), 268–288 (IIAKLYGLIATLVGGFVGGIV), 295–315 (FKGLIITGIAQSLTHFAFIWL), 324–344 (ALLIAITIENFAAAMGATALV), 360–379 (YALLSSASSLCNNTVTIYAG), and 389–409 (GFFLFTIILALPALFILMYLN).

Belongs to the major facilitator superfamily.

The protein localises to the cell inner membrane. The protein is Putative transporter AmpG 4 (ampG4) of Rickettsia conorii (strain ATCC VR-613 / Malish 7).